Here is a 594-residue protein sequence, read N- to C-terminus: UvrABC system protein C (594 aa).

The 78-residue stretch at 14–91 folds into the GIY-YIG domain; it reads DQPGCYLMKD…IKKHDPKYNI (78 aa). One can recognise a UVR domain in the interval 196–231; that stretch reads KEVRSELETKMYEASEKLEFERAKELRDQIAHIDAI.

This sequence belongs to the UvrC family. As to quaternary structure, interacts with UvrB in an incision complex.

Its subcellular location is the cytoplasm. Functionally, the UvrABC repair system catalyzes the recognition and processing of DNA lesions. UvrC both incises the 5' and 3' sides of the lesion. The N-terminal half is responsible for the 3' incision and the C-terminal half is responsible for the 5' incision. This chain is UvrABC system protein C, found in Bacillus thuringiensis (strain Al Hakam).